The sequence spans 262 residues: Plant intracellular Ras-group-related LRR protein 7 (262 aa).

LRR repeat units follow at residues 19 to 42, 43 to 66, 68 to 89, 90 to 112, 113 to 135, 137 to 158, 159 to 181, 182 to 204, and 206 to 231; these read WRST…VLQV, GNSL…VGTL, NMQR…IGYL, RNLK…LGSL, SNLQ…VGDL, NMLL…IGGC, SSLE…ICNL, VCLK…LLKD, and KALQ…GFTE.

This sequence belongs to the SHOC2 family. As to expression, widely expressed and preferentially in leaf sheathes.

Leucine-rich repeat protein that likely mediates protein interactions, possibly in the context of signal transduction. This Oryza sativa subsp. japonica (Rice) protein is Plant intracellular Ras-group-related LRR protein 7 (IRL7).